The chain runs to 257 residues: UPF0758 protein Bcenmc03_2526 (257 aa).

Residues 1–53 (MLSPCPILPSAECRDTADTPADPPGRVIPINRRRRRPGDWRPERPRERLLERG) are disordered. Positions 37–51 (PGDWRPERPRERLLE) are enriched in basic and acidic residues. The MPN domain maps to 135–257 (QIDSPGAVED…TFSFARAGWL (123 aa)). His206, His208, and Asp219 together coordinate Zn(2+). A JAMM motif motif is present at residues 206–219 (HNHPSGAVQPSAED).

Belongs to the UPF0758 family.

The sequence is that of UPF0758 protein Bcenmc03_2526 from Burkholderia orbicola (strain MC0-3).